We begin with the raw amino-acid sequence, 305 residues long: MGAKSMEGMNLKQTAIADFHHVSVLPTALVEGLEPKPGGYYLDATVGAGGHSERLLKLGIPLALTMIDRDVQAIAAAMERLQPLVADRKDISINTWQGNFADFPGQLEQFDGIIADLGVSSPQLDQGDRGFSFRHTAPLDMRMDQSQDLTAAEIINHWSEKDLARIFYEYGEERLSRRIARQIVEQRPFQTTTDLAEAITKWVPGKYRHGRIHPATRTFQGLRIAVNDELGSLEKFIAQAPHWLKSGGKFGIISFHSLEDRIVKHRFRETENLRVLTKKPIIAGEEEQRQNPRARSAKLRWAEKI.

Residues Gly-49–His-51, Asp-68, Phe-100, Asp-116, and Gln-123 contribute to the S-adenosyl-L-methionine site.

Belongs to the methyltransferase superfamily. RsmH family.

It is found in the cytoplasm. It catalyses the reaction cytidine(1402) in 16S rRNA + S-adenosyl-L-methionine = N(4)-methylcytidine(1402) in 16S rRNA + S-adenosyl-L-homocysteine + H(+). Specifically methylates the N4 position of cytidine in position 1402 (C1402) of 16S rRNA. This Synechocystis sp. (strain ATCC 27184 / PCC 6803 / Kazusa) protein is Ribosomal RNA small subunit methyltransferase H.